We begin with the raw amino-acid sequence, 247 residues long: Adenosine 5'-phosphosulfate reductase (247 aa).

C133, C134, C216, and C219 together coordinate [4Fe-4S] cluster. The interval 222 to 247 is disordered; it reads KPAPGSDPRSGRWAGQAKTECGLHAS. The active-site Nucleophile; cysteine thiosulfonate intermediate is C242.

This sequence belongs to the PAPS reductase family. CysH subfamily. [4Fe-4S] cluster serves as cofactor.

Its subcellular location is the cytoplasm. It catalyses the reaction [thioredoxin]-disulfide + sulfite + AMP + 2 H(+) = adenosine 5'-phosphosulfate + [thioredoxin]-dithiol. It functions in the pathway sulfur metabolism; hydrogen sulfide biosynthesis; sulfite from sulfate. In terms of biological role, catalyzes the formation of sulfite from adenosine 5'-phosphosulfate (APS) using thioredoxin as an electron donor. This Rhodococcus opacus (strain B4) protein is Adenosine 5'-phosphosulfate reductase.